A 321-amino-acid polypeptide reads, in one-letter code: Beta-1,3-N-acetylglucosaminyltransferase manic fringe (321 aa).

Residues 1–7 lie on the Cytoplasmic side of the membrane; that stretch reads MQCRLPR. A helical; Signal-anchor for type II membrane protein membrane pass occupies residues 8-27; that stretch reads GLAGALLTLLCMGLLCLRYH. The Lumenal portion of the chain corresponds to 28–321; sequence LNLSPQRVQG…TPWCPQLGAR (294 aa). R70 provides a ligand contact to substrate. An N-linked (GlcNAc...) asparagine glycan is attached at N109. Intrachain disulfides connect C110–C121 and C139–C202. D143 contributes to the substrate binding site. D144 provides a ligand contact to Mn(2+). N-linked (GlcNAc...) asparagine glycosylation occurs at N185. The active site involves D232. H256 is a binding site for Mn(2+). A disulfide bridge links C306 with C315.

This sequence belongs to the glycosyltransferase 31 family. Mn(2+) serves as cofactor.

The protein localises to the golgi apparatus membrane. The enzyme catalyses 3-O-(alpha-L-fucosyl)-L-threonyl-[EGF-like domain protein] + UDP-N-acetyl-alpha-D-glucosamine = 3-O-(N-acetyl-beta-D-glucosaminyl-(1-&gt;3)-alpha-L-fucosyl)-L-threonyl-[EGF-like domain protein] + UDP + H(+). It carries out the reaction 3-O-(alpha-L-fucosyl)-L-seryl-[EGF-like domain protein] + UDP-N-acetyl-alpha-D-glucosamine = 3-O-(N-acetyl-beta-D-glucosaminyl-(1-&gt;3)-alpha-L-fucosyl)-L-seryl-[EGF-like domain protein] + UDP + H(+). Glycosyltransferase that initiates the elongation of O-linked fucose residues attached to EGF-like repeats in the extracellular domain of Notch molecules. Modulates NOTCH1 activity by modifying O-fucose residues at specific EGF-like domains resulting in inhibition of NOTCH1 activation by JAG1 and enhancement of NOTCH1 activation by DLL1 via an increase in its binding to DLL1. The chain is Beta-1,3-N-acetylglucosaminyltransferase manic fringe from Homo sapiens (Human).